Reading from the N-terminus, the 555-residue chain is Trehalase (555 aa).

Positions 1–16 are cleaved as a signal peptide; sequence MIPFLLMVAFADTVLQ. Asn-46 carries N-linked (GlcNAc...) asparagine glycosylation. Residues Arg-164, 171 to 172, and Asn-208 contribute to the substrate site; that span reads WD. The N-linked (GlcNAc...) asparagine glycan is linked to Asn-216. Substrate contacts are provided by residues 217–219, 282–284, and Gly-316; these read RSQ and RPE. The active-site Proton donor/acceptor is the Asp-318. Asn-334 and Asn-371 each carry an N-linked (GlcNAc...) asparagine glycan. Glu-516 functions as the Proton donor/acceptor in the catalytic mechanism. Glu-531 contacts substrate.

The protein belongs to the glycosyl hydrolase 37 family. As to expression, bean-shaped accessory glands (bags).

It localises to the secreted. The catalysed reaction is alpha,alpha-trehalose + H2O = alpha-D-glucose + beta-D-glucose. The polypeptide is Trehalase (Tenebrio molitor (Yellow mealworm beetle)).